The primary structure comprises 202 residues: MDLTIVGSDNTLPVSDVVFGREFSEALVHQVVVAYRNTARSGTKAQKSRSQVSGTTKKSKKQKGGGARHGALTAPIFVGGGVAFAAKPRSFSQKVNRKQYRSAICSIFSELNRQGRLKVVDAFDVEVSKTRVFAEKIKSLEVVGSSLLIVSDEISECLSLSSRNLPCVDVRSVQALDPVALVGSDVVVLTVGAVKKIEEWLV.

Residues 42-52 (GTKAQKSRSQV) show a composition bias toward polar residues. The disordered stretch occupies residues 42 to 70 (GTKAQKSRSQVSGTTKKSKKQKGGGARHG).

The protein belongs to the universal ribosomal protein uL4 family. In terms of assembly, part of the 50S ribosomal subunit.

Functionally, one of the primary rRNA binding proteins, this protein initially binds near the 5'-end of the 23S rRNA. It is important during the early stages of 50S assembly. It makes multiple contacts with different domains of the 23S rRNA in the assembled 50S subunit and ribosome. Forms part of the polypeptide exit tunnel. This is Large ribosomal subunit protein uL4 from Xylella fastidiosa (strain Temecula1 / ATCC 700964).